Reading from the N-terminus, the 62-residue chain is Small ribosomal subunit protein uS14 (62 aa).

Residues Cys25, Cys28, Cys41, and Cys44 each coordinate Zn(2+).

The protein belongs to the universal ribosomal protein uS14 family. Zinc-binding uS14 subfamily. Part of the 30S ribosomal subunit. Contacts proteins S3 and S10. The cofactor is Zn(2+).

Binds 16S rRNA, required for the assembly of 30S particles and may also be responsible for determining the conformation of the 16S rRNA at the A site. In Aquifex aeolicus (strain VF5), this protein is Small ribosomal subunit protein uS14.